A 510-amino-acid chain; its full sequence is Chorion transcription factor Cf2 (510 aa).

Residues methionine 1–glutamate 10 are compositionally biased toward polar residues. The interval methionine 1–threonine 40 is disordered. Residues serine 30–threonine 40 are compositionally biased toward low complexity. 2 C2H2-type zinc fingers span residues histidine 74 to histidine 97 and histidine 125 to histidine 148. Over residues proline 222–histidine 237 the composition is skewed to basic and acidic residues. A disordered region spans residues proline 222 to aspartate 279. Residues glutamine 240–glutamine 257 show a composition bias toward low complexity. C2H2-type zinc fingers lie at residues histidine 366–histidine 388, tyrosine 401–histidine 423, phenylalanine 429–histidine 451, phenylalanine 457–histidine 479, and tyrosine 485–histidine 508.

In terms of tissue distribution, isoform I is found in embryos, pupae and adult somatic tissue; isoform II occurs in embryos, pupae, ovaries, testis and to a lesser extent in adult somatic tissue.

Its subcellular location is the nucleus. Functionally, transcriptional regulator; binds to the promoter region of Cp15. Also binds to its own promoter, thus having a probable autoregulatory role. The chain is Chorion transcription factor Cf2 (Cf2) from Drosophila melanogaster (Fruit fly).